The chain runs to 174 residues: CD164 sialomucin-like 2 protein (174 aa).

The signal sequence occupies residues 1-29 (MEAPGPRALRTALCGGCCCLLLCAQLAVA). Topologically, residues 30–141 (GKGARGFGRG…AHSPGFDGAS (112 aa)) are extracellular. N-linked (GlcNAc...) asparagine glycosylation is found at Asn-71 and Asn-103. Residues 142–162 (FIGGVVLVLSLQAVAFFVLHF) form a helical membrane-spanning segment. The Cytoplasmic segment spans residues 163–174 (LKAKDSTYQTLI).

It belongs to the CD164 family.

It localises to the membrane. The chain is CD164 sialomucin-like 2 protein (CD164L2) from Homo sapiens (Human).